A 229-amino-acid chain; its full sequence is Large ribosomal subunit protein uL1 (229 aa).

It belongs to the universal ribosomal protein uL1 family. In terms of assembly, part of the 50S ribosomal subunit.

Binds directly to 23S rRNA. The L1 stalk is quite mobile in the ribosome, and is involved in E site tRNA release. Its function is as follows. Protein L1 is also a translational repressor protein, it controls the translation of the L11 operon by binding to its mRNA. The chain is Large ribosomal subunit protein uL1 from Streptococcus equi subsp. equi (strain 4047).